Reading from the N-terminus, the 196-residue chain is ATP-dependent Clp protease proteolytic subunit (196 aa).

Ser101 (nucleophile) is an active-site residue. The active site involves His126.

Belongs to the peptidase S14 family. In terms of assembly, component of the chloroplastic Clp protease core complex.

It is found in the plastid. It localises to the chloroplast stroma. It catalyses the reaction Hydrolysis of proteins to small peptides in the presence of ATP and magnesium. alpha-casein is the usual test substrate. In the absence of ATP, only oligopeptides shorter than five residues are hydrolyzed (such as succinyl-Leu-Tyr-|-NHMec, and Leu-Tyr-Leu-|-Tyr-Trp, in which cleavage of the -Tyr-|-Leu- and -Tyr-|-Trp bonds also occurs).. Functionally, cleaves peptides in various proteins in a process that requires ATP hydrolysis. Has a chymotrypsin-like activity. Plays a major role in the degradation of misfolded proteins. The chain is ATP-dependent Clp protease proteolytic subunit from Aethionema cordifolium (Lebanon stonecress).